The chain runs to 272 residues: Sulfate transporter CysZ (272 aa).

4 helical membrane-spanning segments follow: residues 29–49 (FVIM…WLFI), 66–86 (WLSF…LLLF), 148–168 (IIAL…VPVL), and 219–239 (FVPV…TLMW).

The protein belongs to the CysZ family.

It is found in the cell inner membrane. High affinity, high specificity proton-dependent sulfate transporter, which mediates sulfate uptake. Provides the sulfur source for the cysteine synthesis pathway. The sequence is that of Sulfate transporter CysZ from Haemophilus influenzae (strain ATCC 51907 / DSM 11121 / KW20 / Rd).